Reading from the N-terminus, the 97-residue chain is Co-chaperonin GroES (97 aa).

Belongs to the GroES chaperonin family. Heptamer of 7 subunits arranged in a ring. Interacts with the chaperonin GroEL.

Its subcellular location is the cytoplasm. In terms of biological role, together with the chaperonin GroEL, plays an essential role in assisting protein folding. The GroEL-GroES system forms a nano-cage that allows encapsulation of the non-native substrate proteins and provides a physical environment optimized to promote and accelerate protein folding. GroES binds to the apical surface of the GroEL ring, thereby capping the opening of the GroEL channel. This is Co-chaperonin GroES from Pseudomonas putida (Arthrobacter siderocapsulatus).